The chain runs to 87 residues: MAFKKRFTPRRKFCRFCADKDLPINYKRPDILRDFVTERGKIIARRITGTCAHHQRLLTTEIKRARQMALLFYTSTHSSDVLKKSSL.

Belongs to the bacterial ribosomal protein bS18 family. In terms of assembly, part of the 30S ribosomal subunit. Forms a tight heterodimer with protein bS6.

In terms of biological role, binds as a heterodimer with protein bS6 to the central domain of the 16S rRNA, where it helps stabilize the platform of the 30S subunit. This Oleidesulfovibrio alaskensis (strain ATCC BAA-1058 / DSM 17464 / G20) (Desulfovibrio alaskensis) protein is Small ribosomal subunit protein bS18.